Here is a 272-residue protein sequence, read N- to C-terminus: 3-methyl-2-oxobutanoate hydroxymethyltransferase (272 aa).

Mg(2+) contacts are provided by D51 and D90. Residues 51 to 52, D90, and K120 contribute to the 3-methyl-2-oxobutanoate site; that span reads DS. Mg(2+) is bound at residue E122. The active-site Proton acceptor is E189.

Belongs to the PanB family. In terms of assembly, homodecamer; pentamer of dimers. Requires Mg(2+) as cofactor.

It localises to the cytoplasm. It catalyses the reaction 3-methyl-2-oxobutanoate + (6R)-5,10-methylene-5,6,7,8-tetrahydrofolate + H2O = 2-dehydropantoate + (6S)-5,6,7,8-tetrahydrofolate. The protein operates within cofactor biosynthesis; (R)-pantothenate biosynthesis; (R)-pantoate from 3-methyl-2-oxobutanoate: step 1/2. Catalyzes the reversible reaction in which hydroxymethyl group from 5,10-methylenetetrahydrofolate is transferred onto alpha-ketoisovalerate to form ketopantoate. This is 3-methyl-2-oxobutanoate hydroxymethyltransferase from Syntrophus aciditrophicus (strain SB).